A 337-amino-acid polypeptide reads, in one-letter code: Inner membrane protein YhjD (337 aa).

A compositionally biased stretch (basic and acidic residues) spans 1-29 (MTQENEIKRPIQDLEHEPIKPLDNSEKGS). Positions 1 to 31 (MTQENEIKRPIQDLEHEPIKPLDNSEKGSKV) are disordered. The Cytoplasmic segment spans residues 1-74 (MTQENEIKRP…LGNQFGAAIT (74 aa)). A helical membrane pass occupies residues 75 to 97 (YFSFLSMIPILMVSFAAGGFVLA). The Periplasmic portion of the chain corresponds to 98 to 133 (SHPMLLQDIFDKILQNISDPTLAATLKNTINTAVQQ). The helical transmembrane segment at 134 to 156 (RTTVGLVGLAVALYSGINWMGNL) threads the bilayer. Over 157 to 185 (REAIRAQSRDVWERSPQDQEKFWVKYLRD) the chain is Cytoplasmic. A helical membrane pass occupies residues 186–208 (FISLIGLLIALIVTLSITSVAGS). The Periplasmic segment spans residues 209–227 (AQQMIISALHLNSIEWLKP). Residues 228 to 250 (TWRLIGLAISIFANYLLFFWIFW) form a helical membrane-spanning segment. The Cytoplasmic segment spans residues 251–261 (RLPRHRPRKKA). Residues 262 to 284 (LIRGTFLAAIGFEVIKIVMTYTL) traverse the membrane as a helical segment. The Periplasmic portion of the chain corresponds to 285–298 (PSLMKSPSGAAFGS). Residues 299 to 321 (VLGLMAFFYFFARLTLFCAAWIA) traverse the membrane as a helical segment. The Cytoplasmic portion of the chain corresponds to 322–337 (TAEYKDDPRMPGKTQP).

The protein localises to the cell inner membrane. The polypeptide is Inner membrane protein YhjD (yhjD) (Escherichia coli (strain K12)).